Reading from the N-terminus, the 495-residue chain is ATP synthase subunit beta, chloroplastic (495 aa).

172 to 179 (GGAGVGKT) contributes to the ATP binding site.

It belongs to the ATPase alpha/beta chains family. As to quaternary structure, F-type ATPases have 2 components, CF(1) - the catalytic core - and CF(0) - the membrane proton channel. CF(1) has five subunits: alpha(3), beta(3), gamma(1), delta(1), epsilon(1). CF(0) has four main subunits: a(1), b(1), b'(1) and c(9-12).

The protein localises to the plastid. It is found in the chloroplast thylakoid membrane. It carries out the reaction ATP + H2O + 4 H(+)(in) = ADP + phosphate + 5 H(+)(out). Produces ATP from ADP in the presence of a proton gradient across the membrane. The catalytic sites are hosted primarily by the beta subunits. In Beaucarnea recurvata (Elephant-foot tree), this protein is ATP synthase subunit beta, chloroplastic.